The primary structure comprises 548 residues: MAAPTLTADGPRLGQQEMKKMSPSFHPTLWGDFFLSYEAPTEAQEAQMREKAAVLKEEVRNMIKGSHDVPEIVDLIITLQRLNLDYHYEDEINEKLTVVYKSNYDGGNLDLVSRRFYLLRKCGYDVSSDVFLKFKDQLGNFVEADTRSLLSLYNAAFLRIHGETVLDEAISFTMRVLQDRLEHLESPLAEEVSSALDTPLFRRVGTLEMKDYIPIYEKDAKQNKSILEFAKLNFNLLQLRYSSELKECTTWWKELRVESNLSFVRDRIVEVYFWMSGGCYDPQYSHSRIILTKIVAFITILDDTLDSHATSCESMQLAEAIERWDESAVSLLPEYMKDFYMYLLKTFSSFENELGPDKSYRVFYLKEAVKELVREYTKEIKWRDEDYVPKTLKEHLKVSLISIGGTLVLCSAFVGMGDVVTKKIMKWVMSDAELVKSFGIFVRLSNDIVSTKREQREKHCVSTVQCYMKQHEITMDEACEQIKELTEDSWKFMIEQGLALKEYPIIVPRTVLEFARTVDYMYKEADKYTVSHTIKDMLTSLYVKPVLM.

The Mg(2+) site is built by Asp302 and Asp306. Positions 302, 306, 443, and 446 each coordinate substrate. The DDXXD motif motif lies at Asp302–Asp306. Mg(2+)-binding residues include Asn446, Ser450, and Glu454.

This sequence belongs to the terpene synthase family. Monomer. It depends on Mg(2+) as a cofactor. Mn(2+) is required as a cofactor. Expressed in roots. Not detected in leaves, unless damaged by herbivory or infected by fungi.

The protein resides in the cytoplasm. It catalyses the reaction (S)-beta-bisabolene = (S)-beta-macrocarpene. The enzyme catalyses (2E,6E)-farnesyl diphosphate = (S)-beta-bisabolene + diphosphate. It carries out the reaction (2E)-geranyl diphosphate = (4S)-limonene + diphosphate. The catalysed reaction is (2E)-geranyl diphosphate = beta-myrcene + diphosphate. It catalyses the reaction (2E)-geranyl diphosphate = terpinolene + diphosphate. The enzyme catalyses (2E)-geranyl diphosphate + H2O = (S)-linalool + diphosphate. The protein operates within secondary metabolite biosynthesis; terpenoid biosynthesis. In terms of biological role, involved in the biosynthesis of the bicyclic sesquiterpene (S)-beta-macrocarpene. Can use both geranyl diphosphate and farnesyl diphosphate as substrate, but not geranylgeranyl diphosphate. Produces mainly (S)-beta-macrocarpene, but also smaller amounts of beta-bisabolene and (E)-beta-farnesene when used with farnesyl diphosphate as substrate. In the presence of geranyl diphosphate, produces the acyclic monoterpenes beta-myrcene and linalool along with minor amounts of the cyclic compounds limonene, alpha-thujene, sabinene and alpha-terpinolene. May be involved in plant defense. In Zea mays (Maize), this protein is (S)-beta-macrocarpene synthase.